We begin with the raw amino-acid sequence, 413 residues long: Alpha-1-antitrypsin 1-1 (413 aa).

A signal peptide spans 1 to 24 (MTPSISWGLLLLAGLCCLVPSFLA). N-linked (GlcNAc...) asparagine glycosylation is found at Asn-64, Asn-101, and Asn-265. The interval 368–387 (AVTVLQMVPMSMPPILRFDH) is RCL.

It belongs to the serpin family.

It is found in the secreted. Its function is as follows. Inhibitor of serine proteases. Its primary target is elastase, but it also has a moderate affinity for plasmin and thrombin. This Mus musculus (Mouse) protein is Alpha-1-antitrypsin 1-1 (Serpina1a).